A 316-amino-acid chain; its full sequence is Protein YIPF2 (316 aa).

An N-acetylalanine modification is found at Ala-2. Over 2 to 124 (ASADELTFHE…LRNRPDLYGP (123 aa)) the chain is Cytoplasmic. The segment at 16 to 37 (TNLLADTPDAATTSRSDQLTPQ) is disordered. Residues 25–36 (AATTSRSDQLTP) show a composition bias toward polar residues. The chain crosses the membrane as a helical span at residues 125 to 145 (FWICATLAFVLAVTGNLTLVL). Residues 146-163 (AQRRDPSIHYSPQFHKVT) lie on the Lumenal side of the membrane. The chain crosses the membrane as a helical span at residues 164–184 (VAGISIYCYAWLVPLALWGFL). Residues 185-196 (RWRKGVQERMGP) lie on the Cytoplasmic side of the membrane. Residues 197–219 (YTFLETVCIYGYSLFVFIPMVVL) form a helical membrane-spanning segment. Over 220 to 231 (WLIPVPWLQWLF) the chain is Lumenal. Residues 232–252 (GALALGLSAAGLVFTLWPVVR) form a helical membrane-spanning segment. Over 253–256 (EDTR) the chain is Cytoplasmic. Residues 257 to 277 (LVATVLLSVVVLLHALLAMGC) form a helical membrane-spanning segment. Residues 278–316 (KLYFFQSLPPENVAPPPQITSLPSNIALSPTLPQSLAPS) are Lumenal-facing.

This sequence belongs to the YIP1 family. As to quaternary structure, interacts with YIPF6; this interaction may stabilize YIPF2. May also form a ternary complex with YIPF1 and YIPF6.

It is found in the golgi apparatus. It localises to the cis-Golgi network membrane. Its subcellular location is the trans-Golgi network membrane. The protein localises to the late endosome membrane. The chain is Protein YIPF2 (YIPF2) from Homo sapiens (Human).